A 543-amino-acid polypeptide reads, in one-letter code: Protein P78/83 (543 aa).

3 disordered regions span residues 147–222, 235–325, and 373–400; these read QALP…QPAA, RNEK…SLSN, and MAKS…ANTP. A compositionally biased stretch (pro residues) spans 182–221; the sequence is AAPPPPPSPVPNIPAPPPPPPPSMSELPPAPPMPTEPQPA. The WH2 domain occupies 226 to 246; it reads DRQQLLEAIRNEKNRTRLRPV. The segment covering 271-321 has biased composition (pro residues); sequence PKPPSASPPPPPPPPPPPAPPAPPPMVDLSSAPPPPPLVDLPSEMLPPPAP. The span at 375 to 384 shows a compositional bias: polar residues; that stretch reads KSSSEATSND.

Forms a complex with proteins C42 and E27. Interacts with host actin-related protein 2/3 complex. Interacts with protein Ac102.

Its subcellular location is the host cytoplasm. The protein localises to the host nucleus. Functionally, plays a role in the transport of the nucleocapsids from the cytoplasm toward the host nucleus together with the host actin-polymerizing Arp2/3 complex. This is Protein P78/83 (P61) from Lepidoptera (butterflies and moths).